The following is a 1211-amino-acid chain: Diacylglycerol kinase 1 (1211 aa).

The segment at 174–244 (HHSLGGHLSH…RNSSKKSSNS (71 aa)) is disordered. A compositionally biased stretch (polar residues) spans 197–230 (VTPSPLASGPSMFQASNPARRSVDSSPSHSATNH). Residues 231-244 (SQMSRNSSKKSSNS) show a composition bias toward low complexity. 2 EF-hand domains span residues 286-321 (RPEDKLEFMFRLYDTDSNGVLDTAEMDAIVNQMMAV) and 331-366 (ELRPILQEMMVEIDYDADGTVSLDEWQRGGMTTIPL). Ca(2+)-binding residues include aspartate 299, aspartate 301, asparagine 303, glutamate 310, aspartate 344, aspartate 346, aspartate 348, threonine 350, and glutamate 355. 2 Phorbol-ester/DAG-type zinc fingers span residues 382–432 (IHVW…PASC) and 449–498 (LHHW…KKEC). The 135-residue stretch at 548 to 682 (ELSCPLLVFV…LDRWSIEVTN (135 aa)) folds into the DAGKc domain. Disordered regions lie at residues 789 to 841 (TLRT…ETEK), 874 to 893 (AATATPVGSNQSDNSSQRNK), and 910 to 958 (DHED…QQQQ). A compositionally biased stretch (low complexity) spans 795–805 (SSSSSNTSSGS). The segment covering 826–841 (DVREKSVPRRSGETEK) has biased composition (basic and acidic residues). The span at 879-893 (PVGSNQSDNSSQRNK) shows a compositional bias: polar residues. The segment covering 931-958 (NSIPATPATPITPTTPNAASSVLQQQQQ) has biased composition (low complexity).

The protein belongs to the eukaryotic diacylglycerol kinase family. In 10-11 hours embryos, expression is abundant in a limited number of cells in the procephalic region and in the ventral nerve cord. Predominantly expressed in the adult nervous system and muscle: including compound eyes, brain cortex, fibrillar muscle, and tubular muscle.

It catalyses the reaction a 1,2-diacyl-sn-glycerol + ATP = a 1,2-diacyl-sn-glycero-3-phosphate + ADP + H(+). Functionally, upon cell stimulation converts the second messenger diacylglycerol into phosphatidate, initiating the resynthesis of phosphatidylinositols and attenuating protein kinase C activity. May have a role in the development of the embryonic nervous system and the function of the adult nervous system and muscle; regulating signal transduction in neurons. In Drosophila melanogaster (Fruit fly), this protein is Diacylglycerol kinase 1 (Dgk).